A 355-amino-acid chain; its full sequence is tRNA-specific 2-thiouridylase MnmA (355 aa).

ATP contacts are provided by residues 8–15 and Met34; that span reads GMSGGVDS. Catalysis depends on Cys103, which acts as the Nucleophile. Cysteines 103 and 199 form a disulfide. Gly127 serves as a coordination point for ATP. Positions 149–151 are interaction with tRNA; the sequence is KDQ. Cys199 serves as the catalytic Cysteine persulfide intermediate. Residues 305-306 form an interaction with tRNA region; sequence RY.

It belongs to the MnmA/TRMU family.

The protein resides in the cytoplasm. It catalyses the reaction S-sulfanyl-L-cysteinyl-[protein] + uridine(34) in tRNA + AH2 + ATP = 2-thiouridine(34) in tRNA + L-cysteinyl-[protein] + A + AMP + diphosphate + H(+). In terms of biological role, catalyzes the 2-thiolation of uridine at the wobble position (U34) of tRNA, leading to the formation of s(2)U34. This Clostridium acetobutylicum (strain ATCC 824 / DSM 792 / JCM 1419 / IAM 19013 / LMG 5710 / NBRC 13948 / NRRL B-527 / VKM B-1787 / 2291 / W) protein is tRNA-specific 2-thiouridylase MnmA.